The chain runs to 445 residues: Beclin-1 (445 aa).

The BH3 signature appears at 103-122; sequence TMENLSRRLKVTGDLFDIMS. Residues 137–264 are a coiled coil; that stretch reads DTLLDQLDTQ…QLDKLKKTNV (128 aa). Positions 240–445 are evolutionary conserved domain (ECD); that stretch reads DDLKSVENQM…AWVSSQFYNK (206 aa). A required for membrane-association region spans residues 420 to 445; the sequence is WTKALKFMLTNLKWGLAWVSSQFYNK.

Belongs to the beclin family. Component of the PI3K (PI3KC3/PI3K-III/class III phosphatidylinositol 3-kinase) complex. Post-translationally, may be proteolytically processed by caspases; the C-terminal fragment(s) may induce apoptosis.

The protein localises to the cytoplasm. It localises to the golgi apparatus. It is found in the trans-Golgi network membrane. Its subcellular location is the endosome membrane. The protein resides in the endoplasmic reticulum membrane. The protein localises to the mitochondrion membrane. It localises to the cytoplasmic vesicle. It is found in the autophagosome. Plays a central role in autophagy. Acts as core subunit of different PI3K complex forms that mediate formation of phosphatidylinositol 3-phosphate and are believed to play a role in multiple membrane trafficking pathways: PI3KC3-C1 is involved in initiation of autophagosomes and PI3KC3-C2 in maturation of autophagosomes and endocytosis. Involved in regulation of degradative endocytic trafficking and required for the abscission step in cytokinesis, probably in the context of PI3KC3-C2. Essential for the formation of PI3KC3-C2 but not PI3KC3-C1 PI3K complex forms. Involved in endocytosis including endosome formation in neuronal cells. This Xenopus tropicalis (Western clawed frog) protein is Beclin-1 (becn1).